The primary structure comprises 345 residues: Platelet-derived growth factor C (345 aa).

Positions 1 to 22 (MLLLGLLLLTSALAGRRHGAAA) are cleaved as a signal peptide. One can recognise a CUB domain in the interval 46-163 (HEKIITVTSN…PGFCIHYTLL (118 aa)). An N-linked (GlcNAc...) asparagine glycan is attached at Asn-55. 4 disulfides stabilise this stretch: Cys-104–Cys-124, Cys-250–Cys-294, Cys-280–Cys-335, and Cys-287–Cys-337.

This sequence belongs to the PDGF/VEGF growth factor family. In terms of assembly, homodimer; disulfide-linked. Interacts with PDGFRA homodimers, and with heterodimers formed by PDGFRA and PDGFRB. In terms of processing, proteolytic removal of the N-terminal CUB domain releasing the core domain is necessary for unmasking the receptor-binding epitopes of the core domain. Cleavage after basic residues in the hinge region (region connecting the CUB and growth factor domains) gives rise to the receptor-binding form.

Its subcellular location is the secreted. Growth factor that plays an essential role in the regulation of embryonic development, cell proliferation, cell migration, survival and chemotaxis. Potent mitogen and chemoattractant for cells of mesenchymal origin. Required for normal skeleton formation during embryonic development. Required for normal skin morphogenesis during embryonic development. Plays an important role in wound healing, in angiogenesis and blood vessel development. This chain is Platelet-derived growth factor C (PDGFC), found in Gallus gallus (Chicken).